A 240-amino-acid polypeptide reads, in one-letter code: MATVKELKATARPAGGKGAARAERRAGRVPGVIYGDNKPPVTISVDDTELRARILAGRFLTTIFDVELDGQKHRVIPRDFHLDPVRDFPIHVDFLRLGEGALIRVSVPLHLKNAEGAPGVKRGGTVNIVTHTVELEAEAESIPQFIEADVSQLDIGSSLHLSDVVLPKGVKTLSREDLTLVTIVPPSGYAEELKAAAAGPAAGAAAPAAAPAAGAKAPAAGAKAPAAGAKAPAAPAAKKK.

Disordered regions lie at residues 1-23 (MATV…ARAE) and 207-240 (PAAA…AKKK).

It belongs to the bacterial ribosomal protein bL25 family. CTC subfamily. Part of the 50S ribosomal subunit; part of the 5S rRNA/L5/L18/L25 subcomplex. Contacts the 5S rRNA. Binds to the 5S rRNA independently of L5 and L18.

Its function is as follows. This is one of the proteins that binds to the 5S RNA in the ribosome where it forms part of the central protuberance. The sequence is that of Large ribosomal subunit protein bL25 from Rhodopseudomonas palustris (strain BisB18).